A 255-amino-acid polypeptide reads, in one-letter code: Small ribosomal subunit protein uS2 (255 aa).

Belongs to the universal ribosomal protein uS2 family.

This chain is Small ribosomal subunit protein uS2, found in Streptococcus uberis (strain ATCC BAA-854 / 0140J).